We begin with the raw amino-acid sequence, 504 residues long: Ribose import ATP-binding protein RbsA 3 (504 aa).

ABC transporter domains follow at residues 6–238 and 251–494; these read ANLK…VGRP and IGAE…MMGG. Position 38–45 (38–45) interacts with ATP; the sequence is GENGAGKS.

The protein belongs to the ABC transporter superfamily. Ribose importer (TC 3.A.1.2.1) family. The complex is composed of an ATP-binding protein (RbsA), two transmembrane proteins (RbsC) and a solute-binding protein (RbsB).

The protein localises to the cell inner membrane. The catalysed reaction is D-ribose(out) + ATP + H2O = D-ribose(in) + ADP + phosphate + H(+). Part of the ABC transporter complex RbsABC involved in ribose import. Responsible for energy coupling to the transport system. The protein is Ribose import ATP-binding protein RbsA 3 of Rhizobium meliloti (strain 1021) (Ensifer meliloti).